We begin with the raw amino-acid sequence, 623 residues long: Xaa-Pro aminopeptidase 1 (623 aa).

Arg77 provides a ligand contact to a peptide. Lys304 carries the post-translational modification N6-acetyllysine. His395 provides a ligand contact to a peptide. The Mn(2+) site is built by Asp415, Asp426, and His489. The a peptide site is built by His489, His498, and Glu523. Mn(2+) is bound by residues Glu523 and Glu537.

Belongs to the peptidase M24B family. Homodimer. Mn(2+) is required as a cofactor.

The protein resides in the cytoplasm. The protein localises to the cytosol. The enzyme catalyses Release of any N-terminal amino acid, including proline, that is linked to proline, even from a dipeptide or tripeptide.. Metalloaminopeptidase that catalyzes the removal of a penultimate prolyl residue from the N-termini of peptides, such as Arg-Pro-Pro. Contributes to the degradation of bradykinin. This chain is Xaa-Pro aminopeptidase 1 (XPNPEP1), found in Bos taurus (Bovine).